A 168-amino-acid polypeptide reads, in one-letter code: MGSLRILGVDPGYGIVGIGIIEVSGNRISHVFHGTIETPKNLPAEKRLKRIYEEFLKVLERFSPDECAMEKLFFVKNVTTAIGVGEARGVLFLALAEKNIPVFEYAPNEVKVSLSGYGRASKKQIQENVKRFLNLSEIPRPDDAADALAIAWCHALQSRARRVTHEKD.

Residues aspartate 10, glutamate 70, and aspartate 143 contribute to the active site. Residues aspartate 10, glutamate 70, and aspartate 143 each contribute to the Mg(2+) site.

This sequence belongs to the RuvC family. As to quaternary structure, homodimer which binds Holliday junction (HJ) DNA. The HJ becomes 2-fold symmetrical on binding to RuvC with unstacked arms; it has a different conformation from HJ DNA in complex with RuvA. In the full resolvosome a probable DNA-RuvA(4)-RuvB(12)-RuvC(2) complex forms which resolves the HJ. Mg(2+) serves as cofactor.

Its subcellular location is the cytoplasm. The catalysed reaction is Endonucleolytic cleavage at a junction such as a reciprocal single-stranded crossover between two homologous DNA duplexes (Holliday junction).. Functionally, the RuvA-RuvB-RuvC complex processes Holliday junction (HJ) DNA during genetic recombination and DNA repair. Endonuclease that resolves HJ intermediates. Cleaves cruciform DNA by making single-stranded nicks across the HJ at symmetrical positions within the homologous arms, yielding a 5'-phosphate and a 3'-hydroxyl group; requires a central core of homology in the junction. The consensus cleavage sequence is 5'-(A/T)TT(C/G)-3'. Cleavage occurs on the 3'-side of the TT dinucleotide at the point of strand exchange. HJ branch migration catalyzed by RuvA-RuvB allows RuvC to scan DNA until it finds its consensus sequence, where it cleaves and resolves the cruciform DNA. The sequence is that of Crossover junction endodeoxyribonuclease RuvC from Thermotoga maritima (strain ATCC 43589 / DSM 3109 / JCM 10099 / NBRC 100826 / MSB8).